The chain runs to 103 residues: Small ribosomal subunit protein uS10 (103 aa).

It belongs to the universal ribosomal protein uS10 family. As to quaternary structure, part of the 30S ribosomal subunit.

In terms of biological role, involved in the binding of tRNA to the ribosomes. The chain is Small ribosomal subunit protein uS10 from Alteromonas mediterranea (strain DSM 17117 / CIP 110805 / LMG 28347 / Deep ecotype).